Here is a 111-residue protein sequence, read N- to C-terminus: Ribonuclease P protein component (111 aa).

The protein belongs to the RnpA family. In terms of assembly, consists of a catalytic RNA component (M1 or rnpB) and a protein subunit.

The enzyme catalyses Endonucleolytic cleavage of RNA, removing 5'-extranucleotides from tRNA precursor.. Functionally, RNaseP catalyzes the removal of the 5'-leader sequence from pre-tRNA to produce the mature 5'-terminus. It can also cleave other RNA substrates such as 4.5S RNA. The protein component plays an auxiliary but essential role in vivo by binding to the 5'-leader sequence and broadening the substrate specificity of the ribozyme. The polypeptide is Ribonuclease P protein component (Alkaliphilus metalliredigens (strain QYMF)).